Here is a 549-residue protein sequence, read N- to C-terminus: Biotin-dependent acetyl-/propionyl-coenzyme A carboxylase beta5 subunit (549 aa).

The CoA carboxyltransferase N-terminal domain occupies 25-281; that stretch reads TAGKLAELHK…NNFTDAPRYS (257 aa). In terms of domain architecture, CoA carboxyltransferase C-terminal spans 295-542; that stretch reads AKDLELDTLI…ERKIAHLPPK (248 aa).

The protein belongs to the AccD/PCCB family. As to quaternary structure, the biotin-dependent acyl-CoA carboxylase complex is composed of AccA3, which contains the biotin carboxylase (BC) and biotin carboxyl carrier protein (BCCP) domains, and AccD5, which contains the carboxyl transferase (CT) domain.

It catalyses the reaction N(6)-carboxybiotinyl-L-lysyl-[protein] + acetyl-CoA = N(6)-biotinyl-L-lysyl-[protein] + malonyl-CoA. The enzyme catalyses N(6)-carboxybiotinyl-L-lysyl-[protein] + propanoyl-CoA = methylmalonyl-CoA + N(6)-biotinyl-L-lysyl-[protein]. It functions in the pathway lipid metabolism; mycolic acid biosynthesis. Its function is as follows. Component of a biotin-dependent acyl-CoA carboxylase complex. This subunit transfers the CO2 from carboxybiotin to the CoA ester substrate. When associated with the alpha3 subunit AccA3, is involved in the carboxylation of acetyl-CoA and propionyl-CoA. This is Biotin-dependent acetyl-/propionyl-coenzyme A carboxylase beta5 subunit (accD5) from Mycobacterium leprae (strain TN).